The following is a 377-amino-acid chain: Phospho-N-acetylmuramoyl-pentapeptide-transferase (377 aa).

The next 10 membrane-spanning stretches (helical) occupy residues 2-22 (IQLL…TPAL), 55-75 (VAIL…SVLA), 82-102 (ITLS…VGFL), 122-142 (MVLQ…FPDA), 162-182 (LAFA…NLIA), 195-215 (LDGL…LITL), 236-256 (PMDL…FLWW), 263-283 (IFMG…FAVL), 288-308 (LLLV…ILQV), and 343-363 (FWVI…GDWL).

It belongs to the glycosyltransferase 4 family. MraY subfamily. The cofactor is Mg(2+).

It is found in the cell membrane. It carries out the reaction UDP-N-acetyl-alpha-D-muramoyl-L-alanyl-gamma-D-glutamyl-meso-2,6-diaminopimeloyl-D-alanyl-D-alanine + di-trans,octa-cis-undecaprenyl phosphate = di-trans,octa-cis-undecaprenyl diphospho-N-acetyl-alpha-D-muramoyl-L-alanyl-D-glutamyl-meso-2,6-diaminopimeloyl-D-alanyl-D-alanine + UMP. It participates in cell wall biogenesis; peptidoglycan biosynthesis. Its function is as follows. Catalyzes the initial step of the lipid cycle reactions in the biosynthesis of the cell wall peptidoglycan: transfers peptidoglycan precursor phospho-MurNAc-pentapeptide from UDP-MurNAc-pentapeptide onto the lipid carrier undecaprenyl phosphate, yielding undecaprenyl-pyrophosphoryl-MurNAc-pentapeptide, known as lipid I. This is Phospho-N-acetylmuramoyl-pentapeptide-transferase from Kocuria rhizophila (strain ATCC 9341 / DSM 348 / NBRC 103217 / DC2201).